A 295-amino-acid chain; its full sequence is Proline iminopeptidase (295 aa).

The AB hydrolase-1 domain occupies 35–279; that stretch reads TLHGGPGMSH…ACSHLTMWED (245 aa). The active-site Nucleophile is Ser-107. Asp-246 is a catalytic residue. His-273 (proton donor) is an active-site residue.

The protein belongs to the peptidase S33 family. As to quaternary structure, part of the tricorn proteolytic complex.

The enzyme catalyses Release of N-terminal proline from a peptide.. In terms of biological role, cleaves H-Pro-AMC as well as a wide spectrum of amino acid substrates and several peptide substrates without a proline at the N-terminus. In conjunction with the three factors F1, F2 and F3, Tricorn degrades oligopeptides in a sequential manner, yielding free amino acids. This chain is Proline iminopeptidase (pip), found in Thermoplasma volcanium (strain ATCC 51530 / DSM 4299 / JCM 9571 / NBRC 15438 / GSS1).